Consider the following 288-residue polypeptide: MGNDKRVRKPEWLKISIGANERYTETKRIVESHCLHTICSSGRCPNMGECWGKGTATFMIAGDICTRSCKFCNTQTGRPLPLDPDEPAHVAESIALMKLSHAVITSVDRDDLPDLGAAHWAQTIREIKRLNPETTTEVLIPDFQGRKELIDQVIKACPEIISHNMETVKRISPQVRSAANYHTSLEVIRQIAESGITAKSGIMVGLGETPAEVEELMDDLISVGCKILTIGQYLQPTHKHFPVAAYITPEQFAVYKETGLKKGFEQVESAPLVRSSYHAEKHIRFNNK.

Cys-39, Cys-44, Cys-50, Cys-65, Cys-69, Cys-72, and Ser-276 together coordinate [4Fe-4S] cluster. One can recognise a Radical SAM core domain in the interval 51 to 265 (WGKGTATFMI…KETGLKKGFE (215 aa)).

Belongs to the radical SAM superfamily. Lipoyl synthase family. It depends on [4Fe-4S] cluster as a cofactor.

It localises to the cytoplasm. The enzyme catalyses [[Fe-S] cluster scaffold protein carrying a second [4Fe-4S](2+) cluster] + N(6)-octanoyl-L-lysyl-[protein] + 2 oxidized [2Fe-2S]-[ferredoxin] + 2 S-adenosyl-L-methionine + 4 H(+) = [[Fe-S] cluster scaffold protein] + N(6)-[(R)-dihydrolipoyl]-L-lysyl-[protein] + 4 Fe(3+) + 2 hydrogen sulfide + 2 5'-deoxyadenosine + 2 L-methionine + 2 reduced [2Fe-2S]-[ferredoxin]. The protein operates within protein modification; protein lipoylation via endogenous pathway; protein N(6)-(lipoyl)lysine from octanoyl-[acyl-carrier-protein]: step 2/2. In terms of biological role, catalyzes the radical-mediated insertion of two sulfur atoms into the C-6 and C-8 positions of the octanoyl moiety bound to the lipoyl domains of lipoate-dependent enzymes, thereby converting the octanoylated domains into lipoylated derivatives. This Bacteroides fragilis (strain YCH46) protein is Lipoyl synthase.